A 196-amino-acid chain; its full sequence is Small ribosomal subunit protein uS4c (196 aa).

The S4 RNA-binding domain maps to 89–150 (MRLDNIVFRL…NQRSKRLVQN (62 aa)).

Belongs to the universal ribosomal protein uS4 family. In terms of assembly, part of the 30S ribosomal subunit. Contacts protein S5. The interaction surface between S4 and S5 is involved in control of translational fidelity.

The protein resides in the plastid. It is found in the chloroplast. Its function is as follows. One of the primary rRNA binding proteins, it binds directly to 16S rRNA where it nucleates assembly of the body of the 30S subunit. Functionally, with S5 and S12 plays an important role in translational accuracy. The sequence is that of Small ribosomal subunit protein uS4c (rps4) from Eleusine indica (Goosegrass).